The chain runs to 929 residues: Synaptopodin (929 aa).

N-acetylmethionine is present on Met-1. A compositionally biased stretch (pro residues) spans 1–12; it reads MLGPHLPPPPLA. The disordered stretch occupies residues 1–260; sequence MLGPHLPPPP…EASLLRHLEK (260 aa). Composition is skewed to basic and acidic residues over residues 60-69 and 91-110; these read GVSRSGDDSA and SREE…DWDV. Position 140 is a phosphoserine (Ser-140). A compositionally biased stretch (basic and acidic residues) spans 142–151; sequence TEKDLKEAKA. The span at 152–170 shows a compositional bias: polar residues; that stretch reads RSQQIAAQLTTPPSSNSRG. Ser-207 is modified (phosphoserine). Pro residues predominate over residues 224-234; the sequence is EPGPPRHPSPQ. Ser-263 carries the phosphoserine modification. The interval 285-389 is disordered; that stretch reads GLHLSQNREA…TLCADGQPQA (105 aa). Low complexity predominate over residues 317–332; it reads LASPSATLTTPTSNSS. N-linked (GlcNAc...) asparagine glycosylation is present at Asn-330. The segment covering 333 to 379 has biased composition (polar residues); the sequence is HNPPATDVNQNPPATVVPQSLPLSSIQQNSSEAQLPSNGTGPASKPS. Phosphoserine is present on residues Ser-501 and Ser-525. Positions 509–558 are disordered; that stretch reads FGEKAPAPQPPSLPDRSPRPQRHIMSRSPMVERRMMGQRSPASERRPLGN. Position 560 is a phosphothreonine (Thr-560). The short motif at 562–565 is the PPxY motif element; that stretch reads PPTY. Ser-580 is modified (phosphoserine). Residues 581–584 carry the PPxY motif motif; the sequence is PPSY. Disordered stretches follow at residues 589 to 610 and 630 to 726; these read PSSD…KTGI and KPKV…KGAE. The span at 646-656 shows a compositional bias: basic and acidic residues; the sequence is ADEKRRQRDQG. Ser-685, Ser-702, and Tyr-738 each carry phosphoserine. Low complexity predominate over residues 685–698; sequence SPAAAEEVVPEWAS. Residues 740–763 form a disordered region; it reads IESSSHTPELARCPSPTMSLPSSW. At Thr-746 the chain carries Phosphothreonine. Phosphoserine occurs at positions 754, 758, and 779. Thr-783 is modified (phosphothreonine). 8 positions are modified to phosphoserine: Pro-784, Thr-804, Arg-812, Lys-826, Ser-833, Ser-854, Pro-871, and Pro-894. Positions 826–839 are enriched in low complexity; sequence KVSPRAASPAKPSS. The tract at residues 826–916 is disordered; it reads KVSPRAASPA…RPSFSTRNAG (91 aa). Positions 866–880 are enriched in polar residues; it reads GLYTSPGQDSLQPTA.

Belongs to the synaptopodin family. Interacts with BAIAP1. Interacts with actin. Interacts (via PPxY motifs) with WWC1 (via WW domains). O-glycosylated. Expressed in cerebral cortex.

The protein localises to the cytoplasm. It localises to the cytoskeleton. Its subcellular location is the cell junction. The protein resides in the tight junction. It is found in the perikaryon. The protein localises to the cell projection. It localises to the dendritic spine. Its subcellular location is the postsynaptic density. The protein resides in the synapse. It is found in the cytosol. In terms of biological role, actin-associated protein that may play a role in modulating actin-based shape and motility of dendritic spines and renal podocyte foot processes. Seems to be essential for the formation of spine apparatuses in spines of telencephalic neurons, which is involved in synaptic plasticity. The chain is Synaptopodin (SYNPO) from Homo sapiens (Human).